The primary structure comprises 342 residues: Glycerol-1-phosphate dehydrogenase [NAD(P)+] (342 aa).

NAD(+) contacts are provided by residues 84 to 88 (GRPID) and 106 to 109 (TAAS). D111 contacts substrate. S115 provides a ligand contact to NAD(+). Residue D160 participates in substrate binding. Residues D160 and H241 each contribute to the Zn(2+) site. H245 serves as a coordination point for substrate. H260 contacts Zn(2+).

It belongs to the glycerol-1-phosphate dehydrogenase family. As to quaternary structure, homodimer. Zn(2+) is required as a cofactor.

It is found in the cytoplasm. It catalyses the reaction sn-glycerol 1-phosphate + NAD(+) = dihydroxyacetone phosphate + NADH + H(+). The catalysed reaction is sn-glycerol 1-phosphate + NADP(+) = dihydroxyacetone phosphate + NADPH + H(+). It functions in the pathway membrane lipid metabolism; glycerophospholipid metabolism. Functionally, catalyzes the NAD(P)H-dependent reduction of dihydroxyacetonephosphate (DHAP or glycerone phosphate) to glycerol 1-phosphate (G1P). The G1P thus generated is used as the glycerophosphate backbone of phospholipids in the cellular membranes of Archaea. This Pyrobaculum aerophilum (strain ATCC 51768 / DSM 7523 / JCM 9630 / CIP 104966 / NBRC 100827 / IM2) protein is Glycerol-1-phosphate dehydrogenase [NAD(P)+].